The sequence spans 179 residues: Peptidyl-tRNA hydrolase (179 aa).

Tyr14 lines the tRNA pocket. His19 acts as the Proton acceptor in catalysis. TRNA is bound by residues Tyr60, Asn62, and Asn108.

It belongs to the PTH family. Monomer.

It is found in the cytoplasm. The catalysed reaction is an N-acyl-L-alpha-aminoacyl-tRNA + H2O = an N-acyl-L-amino acid + a tRNA + H(+). Its function is as follows. Hydrolyzes ribosome-free peptidyl-tRNAs (with 1 or more amino acids incorporated), which drop off the ribosome during protein synthesis, or as a result of ribosome stalling. Functionally, catalyzes the release of premature peptidyl moieties from peptidyl-tRNA molecules trapped in stalled 50S ribosomal subunits, and thus maintains levels of free tRNAs and 50S ribosomes. This Mycoplasma mobile (strain ATCC 43663 / 163K / NCTC 11711) (Mesomycoplasma mobile) protein is Peptidyl-tRNA hydrolase.